A 146-amino-acid polypeptide reads, in one-letter code: Hemoglobin subunit beta (146 aa).

V1 carries the N-acetylvaline modification. One can recognise a Globin domain in the interval 2–146 (HLTGEEKAAV…VANALAHKYH (145 aa)). T12 is subject to Phosphothreonine. S44 is modified (phosphoserine). K59 carries the post-translational modification N6-acetyllysine. H63 contacts heme b. K82 carries the post-translational modification N6-acetyllysine. Position 92 (H92) interacts with heme b. At C93 the chain carries S-nitrosocysteine. At K144 the chain carries N6-acetyllysine.

Belongs to the globin family. As to quaternary structure, heterotetramer of two alpha chains and two beta chains. As to expression, red blood cells.

Involved in oxygen transport from the lung to the various peripheral tissues. This Mustela putorius furo (European domestic ferret) protein is Hemoglobin subunit beta (HBB).